The following is a 195-amino-acid chain: Protein lin-28 homolog A (195 aa).

One can recognise a CSD domain in the interval 33–106 (QGSGVCKWFN…GLESTQVTGP (74 aa)). Residues 98–127 (LESTQVTGPGGAPCIGSERRPKVKGQQKRR) are disordered. Residues 107-130 (GGAPCIGSERRPKVKGQQKRRQRG) are flexible linker. Residues 118–127 (PKVKGQQKRR) show a composition bias toward basic residues. CCHC-type zinc fingers lie at residues 131–148 (DRCYNCGGLDHHAKECKL) and 153–170 (KKCHFCQNPNHMVAQCPE). The Zn(2+) site is built by C133, C136, H141, C146, C155, C158, H163, and C168.

Belongs to the lin-28 family. As to quaternary structure, monomer.

It is found in the cytoplasm. Its subcellular location is the rough endoplasmic reticulum. The protein resides in the P-body. It localises to the stress granule. The protein localises to the nucleus. It is found in the nucleolus. In terms of biological role, RNA-binding protein that inhibits processing of pre-let-7 miRNAs and regulates translation of mRNAs that control developmental timing, pluripotency and metabolism. Seems to recognize a common structural G-quartet (G4) feature in its miRNA and mRNA targets. 'Translational enhancer' that drives specific mRNAs to polysomes and increases the efficiency of protein synthesis. Its association with the translational machinery and target mRNAs results in an increased number of initiation events per molecule of mRNA and, indirectly, in mRNA stabilization. Suppressor of microRNA (miRNA) biogenesis, including that of let-7. Binds specific target miRNA precursors (pre-miRNAs), recognizing an 5'-GGAG-3' motif found in their terminal loop, and recruits uridylyltransferase. This results in the terminal uridylation of target pre-miRNAs. Uridylated pre-miRNAs fail to be processed by Dicer and undergo degradation. Localized to the periendoplasmic reticulum area, binds to a large number of spliced mRNAs and inhibits the translation of mRNAs destined for the ER, reducing the synthesis of transmembrane proteins, ER or Golgi lumen proteins, and secretory proteins. Binds to and enhances the translation of mRNAs for several metabolic enzymes, increasing glycolysis and oxidative phosphorylation. Which, with the let-7 repression may enhance tissue repair in adult tissue. This Xenopus laevis (African clawed frog) protein is Protein lin-28 homolog A (lin28a).